Here is a 250-residue protein sequence, read N- to C-terminus: Silencing boundary-establishment protein FUB1 (250 aa).

Residues 179–250 are disordered; it reads PDWSGGLPNP…GFGGSGSGFI (72 aa). Residues 202–213 show a composition bias toward basic and acidic residues; that stretch reads PNRRPAPRREDM. The span at 229–250 shows a compositional bias: gly residues; sequence PGSGGFGGSGSGGFGGSGSGFI.

The protein belongs to the proteasome inhibitor PI31 family. As to quaternary structure, interacts with the 20S proteasome.

Plays a role in the establishment of transcriptional silencing boundaries, preventing the propagation of heterochromatic silencing. In Saccharomyces cerevisiae (strain ATCC 204508 / S288c) (Baker's yeast), this protein is Silencing boundary-establishment protein FUB1.